Consider the following 464-residue polypeptide: Cysteine--tRNA ligase (464 aa).

Cys-32 contacts Zn(2+). Residues 34 to 44 (VTVYDDCHIGH) carry the 'HIGH' region motif. Residues Cys-213, His-238, and Glu-242 each contribute to the Zn(2+) site. The 'KMSKS' region signature appears at 270–274 (KMSKS). Lys-273 contributes to the ATP binding site.

This sequence belongs to the class-I aminoacyl-tRNA synthetase family. Monomer. Zn(2+) serves as cofactor.

It localises to the cytoplasm. The catalysed reaction is tRNA(Cys) + L-cysteine + ATP = L-cysteinyl-tRNA(Cys) + AMP + diphosphate. The polypeptide is Cysteine--tRNA ligase (Francisella tularensis subsp. tularensis (strain SCHU S4 / Schu 4)).